Here is a 210-residue protein sequence, read N- to C-terminus: Synaptosomal-associated protein 25 (210 aa).

Positions 1 to 23 are disordered; sequence MENSVENSMDPRSEQEEMQRCAD. Basic and acidic residues predominate over residues 9 to 20; sequence MDPRSEQEEMQR. T-SNARE coiled-coil homology domains follow at residues 23–85 and 147–209; these read DQIT…LSDL and DARE…ATKM.

This sequence belongs to the SNAP-25 family.

It localises to the synapse. The protein resides in the synaptosome. Its subcellular location is the cell membrane. Its function is as follows. May play an important role in the synaptic function of specific neuronal systems. Associates with proteins involved in vesicle docking and membrane fusion. In Torpedo marmorata (Marbled electric ray), this protein is Synaptosomal-associated protein 25 (snap25).